The sequence spans 200 residues: Ribonuclease HII (200 aa).

The region spanning Glu-14 to Asp-200 is the RNase H type-2 domain. A divalent metal cation contacts are provided by Asp-20, Glu-21, and Asp-112.

The protein belongs to the RNase HII family. Mn(2+) is required as a cofactor. The cofactor is Mg(2+).

It is found in the cytoplasm. The enzyme catalyses Endonucleolytic cleavage to 5'-phosphomonoester.. Its function is as follows. Endonuclease that specifically degrades the RNA of RNA-DNA hybrids. The protein is Ribonuclease HII of Salinibacter ruber (strain DSM 13855 / M31).